The primary structure comprises 185 residues: Biogenesis of lysosome-related organelles complex 1 subunit 5 (185 aa).

Residues 1–25 (MSGGGTETPVACDAAQGGKKRDSLG) form a disordered region. Residue Ser-2 is modified to N-acetylserine.

The protein belongs to the BLOC1S5 family. As to quaternary structure, octamer composed of one copy each BLOC1S1, BLOC1S2, BLOC1S3, BLOC1S4, BLOC1S5, BLOC1S6, DTNBP1/BLOC1S7 and SNAPIN/BLOC1S8. Component of the biogenesis of lysosome-related organelles complex 1 (BLOC-1) composed of BLOC1S1, BLOC1S2, BLOC1S3, BLOC1S4, BLOC1S5, BLOC1S6, DTNBP1/BLOC1S7 and SNAPIN/BLOC1S8. The BLOC-1 complex associates with the AP-3 protein complex and membrane protein cargos. Interacts with BLOC1S4, BLOC1S6, DTNBP1/BLOC1S7 and PI4K2A. Detected in heart, brain, spleen, lung, kidney and testis.

Component of the BLOC-1 complex, a complex that is required for normal biogenesis of lysosome-related organelles (LRO), such as platelet dense granules and melanosomes. In concert with the AP-3 complex, the BLOC-1 complex is required to target membrane protein cargos into vesicles assembled at cell bodies for delivery into neurites and nerve terminals. The BLOC-1 complex, in association with SNARE proteins, is also proposed to be involved in neurite extension. Plays a role in intracellular vesicle trafficking. The sequence is that of Biogenesis of lysosome-related organelles complex 1 subunit 5 (Bloc1s5) from Mus musculus (Mouse).